A 600-amino-acid chain; its full sequence is Aspartate--tRNA(Asp/Asn) ligase (600 aa).

Glu187 lines the L-aspartate pocket. Residues 211–214 form an aspartate region; it reads QIFK. The L-aspartate site is built by Arg233 and His463. Residue 233-235 participates in ATP binding; the sequence is RDE. Position 497 (Glu497) interacts with ATP. Residue Arg504 coordinates L-aspartate. 549–552 provides a ligand contact to ATP; sequence GVDR.

It belongs to the class-II aminoacyl-tRNA synthetase family. Type 1 subfamily. Homodimer.

The protein resides in the cytoplasm. The enzyme catalyses tRNA(Asx) + L-aspartate + ATP = L-aspartyl-tRNA(Asx) + AMP + diphosphate. Aspartyl-tRNA synthetase with relaxed tRNA specificity since it is able to aspartylate not only its cognate tRNA(Asp) but also tRNA(Asn). Reaction proceeds in two steps: L-aspartate is first activated by ATP to form Asp-AMP and then transferred to the acceptor end of tRNA(Asp/Asn). The chain is Aspartate--tRNA(Asp/Asn) ligase from Wolbachia sp. subsp. Drosophila simulans (strain wRi).